A 1039-amino-acid polypeptide reads, in one-letter code: Alpha-mannosidase 2C1 (1039 aa).

Histidine 259, aspartate 261, aspartate 371, and histidine 576 together coordinate Co(2+). The Nucleophile role is filled by aspartate 371.

It belongs to the glycosyl hydrolase 38 family. Requires Co(2+) as cofactor. As to expression, expressed in kidney and liver (at protein level). Widely expressed, with highest levels in lung, ovary and testis. Also detected at lower levels in heart, brain, liver, spleen, kidney and thymus.

Its subcellular location is the cytoplasm. The enzyme catalyses Hydrolysis of terminal, non-reducing alpha-D-mannose residues in alpha-D-mannosides.. Inhibited by 1,4-dideoxy-1,4-imino-d-mannitol (DIM) and EDTA. Functionally, cleaves alpha 1,2-, alpha 1,3-, and alpha 1,6-linked mannose residues from glycoproteins. Involved in the degradation of free oligosaccharides in the cytoplasm. The sequence is that of Alpha-mannosidase 2C1 from Mus musculus (Mouse).